Reading from the N-terminus, the 249-residue chain is Small ribosomal subunit protein uS2 (249 aa).

This sequence belongs to the universal ribosomal protein uS2 family.

The sequence is that of Small ribosomal subunit protein uS2 from Polynucleobacter necessarius subsp. necessarius (strain STIR1).